The primary structure comprises 89 residues: Small ribosomal subunit protein uS14 (89 aa).

Belongs to the universal ribosomal protein uS14 family. Part of the 30S ribosomal subunit. Contacts proteins S3 and S10.

Its function is as follows. Binds 16S rRNA, required for the assembly of 30S particles and may also be responsible for determining the conformation of the 16S rRNA at the A site. This chain is Small ribosomal subunit protein uS14, found in Exiguobacterium sibiricum (strain DSM 17290 / CCUG 55495 / CIP 109462 / JCM 13490 / 255-15).